The sequence spans 645 residues: Rab11 family-interacting protein 5 (645 aa).

The C2 domain maps to methionine 1–tyrosine 146. Phosphoserine occurs at positions 176, 283, 286, 307, 357, and 367. The segment at glycine 271–leucine 299 is disordered. The span at arginine 277–serine 286 shows a compositional bias: polar residues. The disordered stretch occupies residues serine 341–arginine 550. Residues serine 357–arginine 374 are compositionally biased toward low complexity. Positions serine 375–tryptophan 387 are enriched in basic and acidic residues. Residues serine 391 and serine 395 each carry the phosphoserine modification. Positions arginine 452–glycine 463 are enriched in basic residues. Phosphoserine is present on residues serine 486, serine 530, serine 539, serine 545, and serine 640. The FIP-RBD domain maps to lysine 578–serine 640.

In terms of assembly, interacts with RAB11FIP4. Interacts with NAPG. Interacts with RO60. Interacts with RAB11A that has been activated by GTP binding. In terms of processing, phosphorylated on serine and threonine residues. Phosphorylation at Ser-357 is PKA-dependent.

The protein localises to the cytoplasm. The protein resides in the recycling endosome membrane. It localises to the early endosome membrane. It is found in the golgi apparatus membrane. Its subcellular location is the cytoplasmic vesicle. The protein localises to the secretory vesicle membrane. The protein resides in the mitochondrion membrane. Its function is as follows. Rab effector involved in protein trafficking from apical recycling endosomes to the apical plasma membrane. Involved in insulin granule exocytosis. May regulate V-ATPase intracellular transport in response to extracellular acidosis. The polypeptide is Rab11 family-interacting protein 5 (Mus musculus (Mouse)).